Consider the following 184-residue polypeptide: MNFMLLSAALASMAVAGPIAGTYPITYPSSNTPATYPSGNAPIWSSPIHGGNNGGNGGNGGDNNGGNGGNGGSGGGNTGGNAGNGGGNNGGNNNGGNNGGNTGGEGGNGGNGGNGGAPVELCPANRVPQCCQLSVLGVADVTCASPSSGLTSVSAFEADCANDGTTAQCCLIPVLGLGLFCSNP.

An N-terminal signal peptide occupies residues 1–16 (MNFMLLSAALASMAVA). Cystine bridges form between Cys-122–Cys-169, Cys-130–Cys-160, Cys-131–Cys-143, and Cys-170–Cys-181.

This sequence belongs to the cerato-ulmin hydrophobin family. Homotetramer. Further self-assembles to form highly ordered films at water-air interfaces through intermolecular interactions. In terms of tissue distribution, expressed in the mycellium.

Its subcellular location is the secreted. Aerial growth, conidiation, and dispersal of filamentous fungi in the environment rely upon a capability of their secreting small amphipathic proteins called hydrophobins (HPBs) with low sequence identity. Class I can self-assemble into an outermost layer of rodlet bundles on aerial cell surfaces, conferring cellular hydrophobicity that supports fungal growth, development and dispersal; whereas Class II form highly ordered films at water-air interfaces through intermolecular interactions but contribute nothing to the rodlet structure. Hcf-6 is a class II hydrophobin that is involved in adhesion and in tomato plants infection. Is secreted to form a coat both around and beneath the fungus. The polypeptide is Class II hydrophobin 6 (Passalora fulva (Tomato leaf mold)).